Consider the following 464-residue polypeptide: Colanic acid biosynthesis protein WcaM (464 aa).

The protein operates within slime biogenesis; slime polysaccharide biosynthesis. The protein is Colanic acid biosynthesis protein WcaM (wcaM) of Shigella flexneri.